We begin with the raw amino-acid sequence, 185 residues long: Ribosome-recycling factor (185 aa).

The protein belongs to the RRF family.

Its subcellular location is the cytoplasm. Its function is as follows. Responsible for the release of ribosomes from messenger RNA at the termination of protein biosynthesis. May increase the efficiency of translation by recycling ribosomes from one round of translation to another. The sequence is that of Ribosome-recycling factor from Streptococcus equi subsp. equi (strain 4047).